Consider the following 51-residue polypeptide: MRDKIRLVSSAGTGYFYTTTKNKRTMPEKMEIKKFDPKIRQHVIFKEAKIK.

The protein belongs to the bacterial ribosomal protein bL33 family.

The chain is Large ribosomal subunit protein bL33 from Acinetobacter baylyi (strain ATCC 33305 / BD413 / ADP1).